The following is a 346-amino-acid chain: D-alanine--D-alanine ligase (346 aa).

Residues 133-324 (KLYAQSVGVK…IVDNLAKNIE (192 aa)) form the ATP-grasp domain. An ATP-binding site is contributed by 159 to 211 (LSFPCILKPARLGSSIGISIVKDESELKYAKDVAFEFDEDVVVEQFVSNIKEY). Mg(2+)-binding residues include D284, E296, and N298.

It belongs to the D-alanine--D-alanine ligase family. Requires Mg(2+) as cofactor. Mn(2+) is required as a cofactor.

Its subcellular location is the cytoplasm. The enzyme catalyses 2 D-alanine + ATP = D-alanyl-D-alanine + ADP + phosphate + H(+). The protein operates within cell wall biogenesis; peptidoglycan biosynthesis. Cell wall formation. This Campylobacter lari (strain RM2100 / D67 / ATCC BAA-1060) protein is D-alanine--D-alanine ligase.